A 597-amino-acid polypeptide reads, in one-letter code: tRNA uridine 5-carboxymethylaminomethyl modification enzyme MnmG (597 aa).

11–16 (GAGHAG) provides a ligand contact to FAD. Residue 275 to 289 (SPRYCPSIEEKIERY) coordinates NAD(+).

Belongs to the MnmG family. Homodimer. Heterotetramer of two MnmE and two MnmG subunits. It depends on FAD as a cofactor.

It localises to the cytoplasm. Functionally, NAD-binding protein involved in the addition of a carboxymethylaminomethyl (cmnm) group at the wobble position (U34) of certain tRNAs, forming tRNA-cmnm(5)s(2)U34. The polypeptide is tRNA uridine 5-carboxymethylaminomethyl modification enzyme MnmG (Endomicrobium trichonymphae).